Reading from the N-terminus, the 598-residue chain is Arginine--tRNA ligase (598 aa).

Residues 140–150 (ANPTGPLHVGH) carry the 'HIGH' region motif.

Belongs to the class-I aminoacyl-tRNA synthetase family. As to quaternary structure, monomer.

Its subcellular location is the cytoplasm. It catalyses the reaction tRNA(Arg) + L-arginine + ATP = L-arginyl-tRNA(Arg) + AMP + diphosphate. In Synechococcus sp. (strain JA-3-3Ab) (Cyanobacteria bacterium Yellowstone A-Prime), this protein is Arginine--tRNA ligase.